The following is a 629-amino-acid chain: MHFHERFDVIVVGGGHAGTEAALAAARMGSKTLLLTHNLDTLGQMSCNPAIGGIGKGHLVKEIDALGGAMAIATDYAGIQFRTLNSSKGPAVRATRAQADRALYRQKIQNILQNQANLRIFQQAVDDIVVENDHVVGVVTQMGLAFEASAVVLTAGTFLSGKIHIGLENYSGGRAGDPPSIALAHRLRELPIRVGRLKTGTPPRIDANTIDFSQMTEQKGDTPLPVMSFMGDVSHHPKQISCWITHTNEKTHDIIRGGLDRSPMYSGVIEGIGPRYCPSIEDKIHRFSDKSSHQIFIEPEGLTTNEIYPNGISTSLPFDVQLNLVRSIKGMENAEIVRPGYAIEYDYFDPRDLKNSLETKTINGLFFAGQINGTTGYEEAGAQGLLAGMNASLQVQGKEAWCPRRDEAYIGVLVDDLSTLGTKEPYRMFTSRAEYRLLLREDNADLRLTAKGRELGLVDDARWAAFSEKMESIELELQRLRSQWIHPNSPLVPVLNPHLNTPISREASFEELLRRPEMDYNKLMQIEGFGPGLADPLAAEQVQIQVKYSGYIQRQQEEINKAVRNENTGLPLNLDYKEVPGLSNEVIAKLNSHKPETIGQASRISGITPAAISILLVHLKKRGLLRKSA.

FAD is bound by residues 13 to 18 (GGGHAG), Val125, and Ser180. An NAD(+)-binding site is contributed by 273–287 (GPRYCPSIEDKIHRF). Gln370 contacts FAD.

It belongs to the MnmG family. Homodimer. Heterotetramer of two MnmE and two MnmG subunits. It depends on FAD as a cofactor.

It is found in the cytoplasm. Functionally, NAD-binding protein involved in the addition of a carboxymethylaminomethyl (cmnm) group at the wobble position (U34) of certain tRNAs, forming tRNA-cmnm(5)s(2)U34. In Shewanella oneidensis (strain ATCC 700550 / JCM 31522 / CIP 106686 / LMG 19005 / NCIMB 14063 / MR-1), this protein is tRNA uridine 5-carboxymethylaminomethyl modification enzyme MnmG.